A 392-amino-acid polypeptide reads, in one-letter code: Phosphoglycerate kinase (392 aa).

Substrate-binding positions include 21-23, Arg-36, 59-62, Arg-114, and Arg-147; these read DMN and HLGR. ATP-binding positions include Lys-198, Glu-320, and 346–349; that span reads GGDT.

The protein belongs to the phosphoglycerate kinase family. As to quaternary structure, monomer.

The protein resides in the cytoplasm. It carries out the reaction (2R)-3-phosphoglycerate + ATP = (2R)-3-phospho-glyceroyl phosphate + ADP. The protein operates within carbohydrate degradation; glycolysis; pyruvate from D-glyceraldehyde 3-phosphate: step 2/5. In Neisseria meningitidis serogroup C / serotype 2a (strain ATCC 700532 / DSM 15464 / FAM18), this protein is Phosphoglycerate kinase.